A 555-amino-acid polypeptide reads, in one-letter code: Protein peste (555 aa).

Topologically, residues 1-7 (MTSRTRH) are cytoplasmic. Residues 8–28 (CARLGIVLLGICCIASGIYLF) traverse the membrane as a helical segment. Over 29-434 (RNWIDMFTRM…VRVSEEIAAD (406 aa)) the chain is Extracellular. Residues N70, N110, N129, N213, N242, N312, and N342 are each glycosylated (N-linked (GlcNAc...) asparagine). Residues 435–455 (IALVPLIVLLGQIVTGILLAG) traverse the membrane as a helical segment. The Cytoplasmic segment spans residues 456–555 (GLICTCWYPT…SEDSPDVVVR (100 aa)).

It belongs to the CD36 family.

It localises to the cell membrane. In terms of biological role, (Microbial infection) Plays a role in mycobacterial infection. Mediates infection by M.fortuitum and uptake of M.smegmatis. The chain is Protein peste from Drosophila melanogaster (Fruit fly).